The following is a 76-amino-acid chain: MGAALSQGALIAIICNGLVGFLLLLLWVILCWACHSRSANIDSLSESSPNSSPGPCPEKAPPPQKPSHEGSYLLQP.

An N-terminal signal peptide occupies residues 1–33 (MGAALSQGALIAIICNGLVGFLLLLLWVILCWA). Positions 41 to 76 (IDSLSESSPNSSPGPCPEKAPPPQKPSHEGSYLLQP) are disordered. Positions 52-65 (SPGPCPEKAPPPQK) are enriched in pro residues.

The protein localises to the secreted. In terms of biological role, involved in the regulation of glucose homeostasis and lipid metabolism. The sequence is that of Adropin (ENHO) from Bos taurus (Bovine).